The following is a 252-amino-acid chain: 5'-nucleotidase SurE (252 aa).

Residues aspartate 8, aspartate 9, serine 39, and asparagine 95 each contribute to the a divalent metal cation site.

Belongs to the SurE nucleotidase family. A divalent metal cation serves as cofactor.

Its subcellular location is the cytoplasm. It catalyses the reaction a ribonucleoside 5'-phosphate + H2O = a ribonucleoside + phosphate. Its function is as follows. Nucleotidase that shows phosphatase activity on nucleoside 5'-monophosphates. The polypeptide is 5'-nucleotidase SurE (Clostridium botulinum (strain Kyoto / Type A2)).